The primary structure comprises 264 residues: Acyl-[acyl-carrier-protein]--UDP-N-acetylglucosamine O-acyltransferase (264 aa).

Belongs to the transferase hexapeptide repeat family. LpxA subfamily. As to quaternary structure, homotrimer.

Its subcellular location is the cytoplasm. The enzyme catalyses a (3R)-hydroxyacyl-[ACP] + UDP-N-acetyl-alpha-D-glucosamine = a UDP-3-O-[(3R)-3-hydroxyacyl]-N-acetyl-alpha-D-glucosamine + holo-[ACP]. The protein operates within glycolipid biosynthesis; lipid IV(A) biosynthesis; lipid IV(A) from (3R)-3-hydroxytetradecanoyl-[acyl-carrier-protein] and UDP-N-acetyl-alpha-D-glucosamine: step 1/6. Involved in the biosynthesis of lipid A, a phosphorylated glycolipid that anchors the lipopolysaccharide to the outer membrane of the cell. This is Acyl-[acyl-carrier-protein]--UDP-N-acetylglucosamine O-acyltransferase from Glaesserella parasuis serovar 5 (strain SH0165) (Haemophilus parasuis).